The sequence spans 367 residues: S-adenosylmethionine:tRNA ribosyltransferase-isomerase (367 aa).

The interval 150 to 182 (RHGEEEESSDEAISSQNPEIATESKRTPSNDDK) is disordered. Over residues 171-182 (TESKRTPSNDDK) the composition is skewed to basic and acidic residues.

This sequence belongs to the QueA family. As to quaternary structure, monomer.

It is found in the cytoplasm. The enzyme catalyses 7-aminomethyl-7-carbaguanosine(34) in tRNA + S-adenosyl-L-methionine = epoxyqueuosine(34) in tRNA + adenine + L-methionine + 2 H(+). Its pathway is tRNA modification; tRNA-queuosine biosynthesis. Functionally, transfers and isomerizes the ribose moiety from AdoMet to the 7-aminomethyl group of 7-deazaguanine (preQ1-tRNA) to give epoxyqueuosine (oQ-tRNA). In Rickettsia felis (strain ATCC VR-1525 / URRWXCal2) (Rickettsia azadi), this protein is S-adenosylmethionine:tRNA ribosyltransferase-isomerase.